The chain runs to 152 residues: MSIKAVCVLVGSVKGTLNFKQDAIGSCTVTGEVSGLIPGKHGFHIHEYGDLTNGCTSSGGHFNPFKQIHGAPEDDIRHVGDLGNITADSSGVATVNITDRMISLTGEHSIIGRAVVVHAGEDDLGKGGHEDSKTTGHAGGRLSCGVIGINHL.

N-acetylserine is present on serine 2. The Cu cation site is built by histidine 44, histidine 46, and histidine 61. An intrachain disulfide couples cysteine 55 to cysteine 144. 4 residues coordinate Zn(2+): histidine 61, histidine 69, histidine 78, and aspartate 81. Position 118 (histidine 118) interacts with Cu cation.

It belongs to the Cu-Zn superoxide dismutase family. In terms of assembly, monomer. The cofactor is Cu cation. Zn(2+) serves as cofactor.

The protein resides in the cytoplasm. It catalyses the reaction 2 superoxide + 2 H(+) = H2O2 + O2. With respect to regulation, inhibited by KCN and diethyldithiocarbamate. Its function is as follows. Destroys radicals which are normally produced within the cells and which are toxic to biological systems. The plasma superoxide dismutase has phagocytosis-stimulating activity and may play an important role in the biological defenses of the organism. The chain is Superoxide dismutase [Cu-Zn] from Halocynthia roretzi (Sea squirt).